The primary structure comprises 441 residues: Capsid vertex component 1 (441 aa).

Belongs to the herpesviridae CVC1 protein family. Interacts (via C-terminus) with capsid vertex component 2/CVC2.

It localises to the virion. The protein resides in the host nucleus. Its function is as follows. Capsid vertex-specific component that plays a role during viral DNA encapsidation, assuring correct genome cleavage and presumably stabilizing capsids that contain full-length viral genomes. The sequence is that of Capsid vertex component 1 from Saimiriine herpesvirus 2 (strain 11) (SaHV-2).